Reading from the N-terminus, the 442-residue chain is Metacaspase-5 (442 aa).

Positions 1-18 (MDLLLGVLSSGILQNALP) are cleaved as a signal peptide. The important for catalytic activity stretch occupies residues 19–62 (FVAGVGRVKRPKRVKLEEAFREAHLCRPVIPYRAPTPYTGGRVK). N69 and N112 each carry an N-linked (GlcNAc...) asparagine glycan. H146 is an active-site residue. Residues D161, D177, and D178 each coordinate Ca(2+). C201 is an active-site residue. Ca(2+) is bound at residue D208. Residues N234, N257, N282, and N331 are each glycosylated (N-linked (GlcNAc...) asparagine). The interval 336–442 (HYVPQQYLQP…QYLSGVGKPL (107 aa)) is negatively regulates catalytic activity. Pro residues predominate over residues 348 to 371 (PPQPYYPPPQPQQPYYPPPQPQQP). A disordered region spans residues 348–442 (PPQPYYPPPQ…QYLSGVGKPL (95 aa)). Residues 372–382 (YYPSSQLPTQY) are compositionally biased toward low complexity. Polar residues predominate over residues 422-434 (PSDQSTYYSSAQY).

It belongs to the peptidase C14B family. Post-translationally, in epimastigotes, the unprocessed enzyme appears to be the main form. Auto-processing is dispensable for catalytic activity towards small oligopeptide substrates.

The protein localises to the recycling endosome. Its activity is regulated as follows. Activated by Ca(2+). Its function is as follows. Cysteine protease that cleaves specifically after arginine or lysine residues. May play a role in apoptosis. This is Metacaspase-5 from Trypanosoma cruzi (strain CL Brener).